The primary structure comprises 896 residues: Zinc finger protein 574 (896 aa).

3 C2H2-type zinc fingers span residues 16-38, 76-98, and 126-148; these read YVCSECNQLYGSLEEVLMHQNSH, YQCLECGQLLMSPSQLLEHQELH, and YECVDCKALFASQELWLNHRQTH. Phosphoserine is present on S164. The segment at 214 to 236 adopts a C2H2-type 4 zinc-finger fold; that stretch reads YKCSECSQLFQLPADFLEHQATH. The segment covering 259–272 has biased composition (low complexity); it reads VEVPVSQPEPVPSS. Residues 259 to 303 form a disordered region; the sequence is VEVPVSQPEPVPSSDHSYELRNGEALGRDRRGRRARRNNSGEPGG. Positions 274 to 287 are enriched in basic and acidic residues; the sequence is HSYELRNGEALGRD. Residue S298 is modified to Phosphoserine. 4 consecutive C2H2-type zinc fingers follow at residues 309–331, 336–358, 364–386, and 392–413; these read LFCSACDQLFLSPHQLQQHLRSH, FKCPLCSRVFPSPSSLDQHLGDH, FLCVDCGLAFGTEALLLAHRRAH, and HSCPCGKTFVNLTKFLYHRRTH. The interval 434–460 is disordered; sequence FPEPAPAETGEPEAPEPPVAEESSAEP. 6 C2H2-type zinc fingers span residues 466-489, 495-517, 523-545, 551-573, 579-601, and 607-630; these read YRCLLCSREFGKALQLTRHQRFVH, HKCSICGKMFKKKSHVRNHLRTH, FPCPDCSKPFNSPANLARHRLTH, YRCGDCGKAFTQSSTLRQHRLVH, YRCQECGVRFHRPYRLLMHRYHH, and YKCRECPRSFLLRRLLEVHQLVAH. A C2H2-type 15; degenerate zinc finger spans residues 636–659; it reads HRCSSCGAAFPSSLRLREHRCAAA. The segment at 667 to 689 adopts a C2H2-type 16 zinc-finger fold; the sequence is FECGTCGKKVGSAARLQAHEAAH. The interval 687–733 is disordered; sequence AAHAAAGPGEVLAKEPPAPRAPRAARTPITSPTTLGSAAPAAPAAPA. Low complexity predominate over residues 707–732; it reads APRAARTPITSPTTLGSAAPAAPAAP. Residue S717 is modified to Phosphoserine. 4 consecutive C2H2-type zinc fingers follow at residues 738–760, 766–788, 794–816, and 822–844; these read LECSECKKLFSTETSLQVHRRIH, YPCPDCGKAFRQSTHLKDHRRLH, FACEVCGKAFAISMRLAEHRRIH, and YSCPDCGKSYRSFSNLWKHRKTH. At R832 the chain carries Asymmetric dimethylarginine.

It belongs to the krueppel C2H2-type zinc-finger protein family.

The protein localises to the nucleus. In terms of biological role, may be involved in transcriptional regulation. The polypeptide is Zinc finger protein 574 (ZNF574) (Bos taurus (Bovine)).